The primary structure comprises 428 residues: 3-phosphoshikimate 1-carboxyvinyltransferase (428 aa).

3-phosphoshikimate-binding residues include Lys-22, Ser-23, and Arg-27. Lys-22 provides a ligand contact to phosphoenolpyruvate. Phosphoenolpyruvate-binding residues include Gly-95 and Arg-123. 3-phosphoshikimate is bound by residues Ser-170, Ser-171, Gln-172, Ser-197, Asp-316, and Lys-343. Residue Gln-172 participates in phosphoenolpyruvate binding. Asp-316 (proton acceptor) is an active-site residue. Residues Arg-347, Arg-390, and Lys-414 each coordinate phosphoenolpyruvate.

It belongs to the EPSP synthase family. In terms of assembly, monomer.

Its subcellular location is the cytoplasm. It carries out the reaction 3-phosphoshikimate + phosphoenolpyruvate = 5-O-(1-carboxyvinyl)-3-phosphoshikimate + phosphate. It functions in the pathway metabolic intermediate biosynthesis; chorismate biosynthesis; chorismate from D-erythrose 4-phosphate and phosphoenolpyruvate: step 6/7. In terms of biological role, catalyzes the transfer of the enolpyruvyl moiety of phosphoenolpyruvate (PEP) to the 5-hydroxyl of shikimate-3-phosphate (S3P) to produce enolpyruvyl shikimate-3-phosphate and inorganic phosphate. This is 3-phosphoshikimate 1-carboxyvinyltransferase from Laribacter hongkongensis (strain HLHK9).